Consider the following 1178-residue polypeptide: Phosphate system positive regulatory protein PHO81 (1178 aa).

Residues 1–169 form the SPX domain; sequence MKFGKYLEAR…QSHDKDFYLA (169 aa). Residues 210–250 form a disordered region; the sequence is QSSTFTNDDDDDNNTSNNNKHNNNNNNNNNNNNNNNNNNIL. The segment covering 223-250 has biased composition (low complexity); sequence NTSNNNKHNNNNNNNNNNNNNNNNNNIL. ANK repeat units follow at residues 423-452, 458-487, 506-535, 556-586, 591-620, and 624-653; these read HSRV…LEDV, DSKT…ANAS, VQFD…KQNA, TGLC…DPNE, NKWT…RLDI, and NGHS…NLPS. The GP-PDE domain maps to 871–1178; that stretch reads IINYEPYWKS…ELLFENNIDM (308 aa). S956 carries the post-translational modification Phosphoserine.

Associates specifically with the PHO80-PHO85 and PCL7-PHO85 cyclin-CDK complexes, and much of this interaction is mediated through the PHO80 and PCL7 cyclin subunits. Interacts with the transcription factor PHO4. In terms of processing, phosphorylated by the cyclin-CDK PHO80-PHO85. Phosphorylation mediates the formation of a stable interaction with the cyclin-CDK and is required for function as an active inhibitor of the complex under phosphate starvation conditions.

Its subcellular location is the cytoplasm. The protein resides in the nucleus. In terms of biological role, inhibits the kinase activity of the cyclin-CDKs PHO80-PHO85 and PCL7-PHO85 under low-phosphate conditions. The chain is Phosphate system positive regulatory protein PHO81 (PHO81) from Saccharomyces cerevisiae (strain ATCC 204508 / S288c) (Baker's yeast).